A 305-amino-acid chain; its full sequence is Aspartate carbamoyltransferase catalytic subunit (305 aa).

Residues R51 and T52 each coordinate carbamoyl phosphate. K79 contributes to the L-aspartate binding site. Carbamoyl phosphate is bound by residues R101, H130, and Q133. L-aspartate contacts are provided by R163 and R215. 2 residues coordinate carbamoyl phosphate: G256 and P257.

Belongs to the aspartate/ornithine carbamoyltransferase superfamily. ATCase family. As to quaternary structure, heterododecamer (2C3:3R2) of six catalytic PyrB chains organized as two trimers (C3), and six regulatory PyrI chains organized as three dimers (R2).

The catalysed reaction is carbamoyl phosphate + L-aspartate = N-carbamoyl-L-aspartate + phosphate + H(+). The protein operates within pyrimidine metabolism; UMP biosynthesis via de novo pathway; (S)-dihydroorotate from bicarbonate: step 2/3. Its function is as follows. Catalyzes the condensation of carbamoyl phosphate and aspartate to form carbamoyl aspartate and inorganic phosphate, the committed step in the de novo pyrimidine nucleotide biosynthesis pathway. In Ehrlichia canis (strain Jake), this protein is Aspartate carbamoyltransferase catalytic subunit.